A 676-amino-acid chain; its full sequence is RNA helicase NPH-II (676 aa).

A Helicase ATP-binding domain is found at 172–347 (FSAWISHRPV…VFLPNPAFIH (176 aa)). 185 to 192 (GGTGVGKT) serves as a coordination point for ATP. The short motif at 296–299 (DEVH) is the DEXH box element. A Helicase C-terminal domain is found at 366–535 (NPSSRMAYIE…NYILYANKFN (170 aa)).

Belongs to the DEAD box helicase family. DEAH subfamily. As to quaternary structure, monomer.

It is found in the virion. The enzyme catalyses ATP + H2O = ADP + phosphate + H(+). Functionally, NTP-dependent helicase that catalyzes unidirectional unwinding of 3'tailed duplex RNAs and plays an important role during transcription of early mRNAs, presumably by preventing R-loop formation behind the elongating RNA polymerase. Might also play a role in the export of newly synthesized mRNA chains out of the core into the cytoplasm. Required for replication and propagation of viral particles. The protein is RNA helicase NPH-II (OPG084) of Homo sapiens (Human).